Consider the following 1057-residue polypeptide: Nuclear RNAi defective-3 protein (1057 aa).

Disordered regions lie at residues 1-89 (MDLL…GLSV) and 344-388 (LTNS…ERTV). Low complexity predominate over residues 17-30 (STAKKPATSASSTP). Composition is skewed to basic and acidic residues over residues 67 to 81 (PKRE…DPKR) and 356 to 388 (GGRE…ERTV). In terms of domain architecture, PAZ spans 387–500 (TVSHYQRQFQ…YPMELMSILP (114 aa)). The Piwi domain occupies 677-1001 (GIIAEKRPDM…LAKRGHNNYK (325 aa)).

It localises to the cytoplasm. It is found in the nucleus. Its function is as follows. Transports small interfering RNAs (siRNAs) from the cytoplasm to the nucleus. Required for RNA interference (RNAi) in nuclei. Required for exogenous RNAi-induced H3K27 methylation. The protein is Nuclear RNAi defective-3 protein (nrde-3) of Caenorhabditis elegans.